Here is an 85-residue protein sequence, read N- to C-terminus: Protein U62 (85 aa).

The protein belongs to the herpesviridae UL91 family.

This is Protein U62 (U62) from Homo sapiens (Human).